The primary structure comprises 504 residues: MEKFQGYLEFDGARQQSFLYPLFFREYIYVLAYDHGLNRLNRNRSIFLENTDYDKKYSSLIVKRLILRMYEQNRLIIPTKDLNQNSFLGHTSLFYYQMISVLFAVIVEIPFSLRLGSSFQGKQFKKSYNLQSIHSIFPFLEDKLAHFNYVLDVLIPYPIHLEILVQILRYWVKDASSLHFFRFCLYEYCNCKNFYIKKKSILNPRFFLFLYNSHVCEYESIFFFLRKRSSHLRSPSYEVLFERIFFYGKIQDFFKVFVNNFPAILGLLKDPFIHYVRYHGRCILATKDTPLLMNKWKYFFVNLWQCYFSVWFQSQKVNINQLSKDNLEFLGYLSSLRLNPLVVRSQMLENSFLIDNVRIKLDSKIPISSIIGSLAKDKFCNVLGHPISKATWTDSSDSDILNRFVRICRNISHYYSGSSKKKNLYRIKYILRLCCVKTLARKHKSTVRAFLKRLGSVLLEEFLTGEDQVLSLIFPRSYYASKRLYRVRIWYLDILYLNDLVNHE.

The protein belongs to the intron maturase 2 family. MatK subfamily.

The protein localises to the plastid. The protein resides in the chloroplast. Usually encoded in the trnK tRNA gene intron. Probably assists in splicing its own and other chloroplast group II introns. The sequence is that of Maturase K from Arabidopsis lyrata (Lyre-leaved rock-cress).